The primary structure comprises 249 residues: Methylthioribulose-1-phosphate dehydratase (249 aa).

The segment at 1-25 is disordered; the sequence is MVDIKPEQTQEGNNNDHLVQSDDPE. The span at 9 to 18 shows a compositional bias: polar residues; that stretch reads TQEGNNNDHL. Position 105 (C105) interacts with substrate. H122 and H124 together coordinate Zn(2+). The Proton donor/acceptor role is filled by E151. H207 contributes to the Zn(2+) binding site.

The protein belongs to the aldolase class II family. MtnB subfamily. Zn(2+) is required as a cofactor.

The protein localises to the cytoplasm. It carries out the reaction 5-(methylsulfanyl)-D-ribulose 1-phosphate = 5-methylsulfanyl-2,3-dioxopentyl phosphate + H2O. It participates in amino-acid biosynthesis; L-methionine biosynthesis via salvage pathway; L-methionine from S-methyl-5-thio-alpha-D-ribose 1-phosphate: step 2/6. Catalyzes the dehydration of methylthioribulose-1-phosphate (MTRu-1-P) into 2,3-diketo-5-methylthiopentyl-1-phosphate (DK-MTP-1-P). The sequence is that of Methylthioribulose-1-phosphate dehydratase from Arthroderma otae (strain ATCC MYA-4605 / CBS 113480) (Microsporum canis).